We begin with the raw amino-acid sequence, 332 residues long: Heptahelical transmembrane protein 1 (332 aa).

The disordered stretch occupies residues 1-52; that stretch reads MDQNGHNDEAETVSCGNGNCKSKIVPGDDHGGDESSGTKRRKKRKTQQKTMK. The Cytoplasmic segment spans residues 1–98; sequence MDQNGHNDEA…VFSFHNESLN (98 aa). Over residues 26–37 the composition is skewed to basic and acidic residues; that stretch reads PGDDHGGDESSG. The span at 38–52 shows a compositional bias: basic residues; the sequence is TKRRKKRKTQQKTMK. A helical membrane pass occupies residues 99–119; that stretch reads VWTHLIGFIFFVALTVANIIH. Residues 120-138 lie on the Extracellular side of the membrane; it reads HDGFFPVDAKSPGNVTRWP. A helical membrane pass occupies residues 139-159; that stretch reads FFVFLGGSMFCLLASSICHLF. The Cytoplasmic portion of the chain corresponds to 160-172; it reads CCHSKELNVFLLR. The helical transmembrane segment at 173–193 threads the bilayer; it reads IDYAGITAMIITSFFPPIFYI. At 194–199 the chain is on the extracellular side; it reads FQCTPR. A helical transmembrane segment spans residues 200-220; it reads WYFIYLAGITSMGIFTIITLF. Over 221-233 the chain is Cytoplasmic; the sequence is TPSLSAPKYRAFR. A helical membrane pass occupies residues 234-254; the sequence is ALLFASMGLFGIVPAAHALVV. Over 255–262 the chain is Extracellular; the sequence is NWGNPQRN. Residues 263 to 283 traverse the membrane as a helical segment; it reads VTLVYELLMAVFYLVGTGFYV. Topologically, residues 284-303 are cytoplasmic; sequence GRVPERLKPGWFDRVGHSHQ. Residues 304-324 form a helical membrane-spanning segment; the sequence is IFHVFVLLGALSHYAAALLFL. Over 325–332 the chain is Extracellular; sequence DWRDHVGC.

The protein belongs to the ADIPOR family. Interacts (via N-terminus) with SCRM/ICE1. In terms of tissue distribution, expressed in roots, hypocotyls, vasculature of cotyledons and leaves, hydathodes and guard cells. In reproductive organs, expressed in trichomes, veins of sepals, stamens and stigmata of pistils.

Its subcellular location is the membrane. Its function is as follows. May act as a negative regulator of abscisic acid (ABA)-mediated osmotic stress signaling and function in cross-talk between cold and osmotic signaling. In Arabidopsis thaliana (Mouse-ear cress), this protein is Heptahelical transmembrane protein 1 (HHP1).